A 469-amino-acid chain; its full sequence is Lipase A (469 aa).

Positions 1–22 are cleaved as a signal peptide; that stretch reads MMFLTQLVSALFLFFLGPISYG. Positions 40 to 51 are enriched in pro residues; that stretch reads PSEDPFYQPPPG. Residues 40–59 form a disordered region; the sequence is PSEDPFYQPPPGYEETEPGT. Asn111 carries an N-linked (GlcNAc...) asparagine glycan. Cys129 and Cys304 are oxidised to a cystine. Residues Ser217, Asp361, and His393 each act as charge relay system in the active site. Cys377 and Cys421 are oxidised to a cystine.

It belongs to the AB hydrolase superfamily. Lipase family. Class Lip subfamily. As to quaternary structure, monomer.

The protein localises to the secreted. It carries out the reaction a triacylglycerol + H2O = a diacylglycerol + a fatty acid + H(+). Functionally, hydrolyzes triglycerides, with a preference for substrates with short-chain lengths (C4 to C8). This Arthroderma benhamiae (strain ATCC MYA-4681 / CBS 112371) (Trichophyton mentagrophytes) protein is Lipase A.